Reading from the N-terminus, the 169-residue chain is Transcription antitermination protein NusB (169 aa).

Positions 150-169 (AAATSRRTETAGGESNDAGS) are disordered.

Belongs to the NusB family.

Its function is as follows. Involved in transcription antitermination. Required for transcription of ribosomal RNA (rRNA) genes. Binds specifically to the boxA antiterminator sequence of the ribosomal RNA (rrn) operons. The sequence is that of Transcription antitermination protein NusB from Rhodococcus jostii (strain RHA1).